Reading from the N-terminus, the 497-residue chain is Serine/threonine-protein kinase 3 (497 aa).

Position 1 is an N-acetylmethionine (M1). The segment at 1–20 (MEQPPASKSKLKKLSEDSLT) is disordered. At S15 the chain carries Phosphoserine. Residues 27 to 278 (FDVLEKLGEG…ATQLLQHPFI (252 aa)) form the Protein kinase domain. ATP-binding positions include 33 to 41 (LGEGSYGSV) and K56. T117 bears the Phosphothreonine; by PKB/AKT1 mark. Residue D146 is the Proton acceptor of the active site. Mg(2+) contacts are provided by N151 and D164. The residue at position 180 (T180) is a Phosphothreonine; by autocatalysis. Residues 287 to 328 (LRDLIAEAMEIKAKRHEEQQRELEEEEENSDEDELDSHTMVK) are a coiled coil. 2 disordered regions span residues 301 to 343 (RHEE…TSTM) and 368 to 394 (NSEE…SPQV). A compositionally biased stretch (acidic residues) spans 309-321 (LEEEEENSDEDEL). S316 is subject to Phosphoserine. Positions 326 to 343 (MVKTSSESVGTMRATSTM) are enriched in polar residues. T336 carries the post-translational modification Phosphothreonine. Residues 366 to 387 (VINSEEEEEEEEEEEEDGTMKR) adopt a coiled-coil conformation. Positions 369 to 382 (SEEEEEEEEEEEED) are enriched in acidic residues. A Phosphothreonine modification is found at T384. T390 carries the post-translational modification Phosphothreonine; by PKB/AKT1. Phosphoserine occurs at positions 391 and 450. Residues 443–490 (FDFLKNLSLEELQMRLKALDPMMEREIEELHQRYSAKRQPILDAMDAK) enclose the SARAH domain. A coiled-coil region spans residues 448 to 479 (NLSLEELQMRLKALDPMMEREIEELHQRYSAK).

It belongs to the protein kinase superfamily. STE Ser/Thr protein kinase family. STE20 subfamily. As to quaternary structure, homodimer; mediated via the coiled-coil region. Interacts with NORE1, which inhibits autoactivation. Interacts with and stabilizes SAV1. Interacts with RAF1, which prevents dimerization and phosphorylation. Interacts with RASSF1. Interacts (via SARAH domain) with isoform 1 of NEK2. Interacts with ESR1 only in the presence of SAV1. Interacts with PKB/AKT1. Forms a tripartite complex with MOBKL1B and STK38. Interacts with RASSF2 (via SARAH domain). Interacts with DLG5 (via PDZ domain 3). Interacts with LATS1; this interaction is inhibited in the presence of DLG5. Interacts with MARK3 in the presence of DLG5. Interacts with RASSF5; this interaction inhibits STK3 autoactivation through heterodimerization. Interacts (when phosphorylated) with SLMAP (via FHA domain); the interaction associates STK3 with the STRIPAK complex. Requires Mg(2+) as cofactor. Post-translationally, autophosphorylated on two residues Thr-174 and Thr-180, leading to activation. Phosphorylation at Thr-117 and Thr-390 by PKB/AKT1, leads to inhibition of its: cleavage, kinase activity, autophosphorylation at Thr-180, binding to RASSF1 and nuclear translocation, and increase in its binding to RAF1. Phosphorylated at Ser-15 by PLK1, leading to activation. Proteolytically cleaved by caspase-3 during apoptosis. Proteolytic cleavage results in kinase activation and nuclear translocation of the truncated form (MST1/N). In terms of processing, ubiquitinated by TRIM69; leading to its redistribution to the perinuclear cytoskeleton.

The protein resides in the cytoplasm. It is found in the nucleus. It carries out the reaction L-seryl-[protein] + ATP = O-phospho-L-seryl-[protein] + ADP + H(+). It catalyses the reaction L-threonyl-[protein] + ATP = O-phospho-L-threonyl-[protein] + ADP + H(+). Inhibited by the C-terminal non-catalytic region. Activated by caspase-cleavage. Full activation also requires homodimerization and autophosphorylation of Thr-180, which are inhibited by the proto-oncogene product RAF1. Activated by RASSF1 which acts by preventing its dephosphorylation. When autophosphorylated at Thr-180, recruits STRIPAK complex and promotes PP2A-mediated dephosphorylation and inactivation of STK3. Functionally, stress-activated, pro-apoptotic kinase which, following caspase-cleavage, enters the nucleus and induces chromatin condensation followed by internucleosomal DNA fragmentation. Key component of the Hippo signaling pathway which plays a pivotal role in organ size control and tumor suppression by restricting proliferation and promoting apoptosis. The core of this pathway is composed of a kinase cascade wherein STK3/MST2 and STK4/MST1, in complex with its regulatory protein SAV1, phosphorylates and activates LATS1/2 in complex with its regulatory protein MOB1, which in turn phosphorylates and inactivates YAP1 oncoprotein and WWTR1/TAZ. Phosphorylation of YAP1 by LATS2 inhibits its translocation into the nucleus to regulate cellular genes important for cell proliferation, cell death, and cell migration. STK3/MST2 and STK4/MST1 are required to repress proliferation of mature hepatocytes, to prevent activation of facultative adult liver stem cells (oval cells), and to inhibit tumor formation. Phosphorylates NKX2-1. Phosphorylates NEK2 and plays a role in centrosome disjunction by regulating the localization of NEK2 to centrosomes, and its ability to phosphorylate CROCC and CEP250. In conjunction with SAV1, activates the transcriptional activity of ESR1 through the modulation of its phosphorylation. Positively regulates RAF1 activation via suppression of the inhibitory phosphorylation of RAF1 on 'Ser-259'. Phosphorylates MOBKL1A and RASSF2. Phosphorylates MOBKL1B on 'Thr-74'. Acts cooperatively with MOBKL1B to activate STK38. This chain is Serine/threonine-protein kinase 3 (Stk3), found in Mus musculus (Mouse).